The following is a 336-amino-acid chain: Tetraacyldisaccharide 4'-kinase (336 aa).

60–67 contacts ATP; it reads TIGGTGKT.

This sequence belongs to the LpxK family.

It carries out the reaction a lipid A disaccharide + ATP = a lipid IVA + ADP + H(+). Its pathway is glycolipid biosynthesis; lipid IV(A) biosynthesis; lipid IV(A) from (3R)-3-hydroxytetradecanoyl-[acyl-carrier-protein] and UDP-N-acetyl-alpha-D-glucosamine: step 6/6. Transfers the gamma-phosphate of ATP to the 4'-position of a tetraacyldisaccharide 1-phosphate intermediate (termed DS-1-P) to form tetraacyldisaccharide 1,4'-bis-phosphate (lipid IVA). In Pseudomonas putida (strain W619), this protein is Tetraacyldisaccharide 4'-kinase.